The sequence spans 224 residues: UPF0758 protein Neut_0782 (224 aa).

The MPN domain maps to 102-224 (IMDSPQSVRS…TVSFAERGLI (123 aa)). Zn(2+) contacts are provided by H173, H175, and D186. The JAMM motif signature appears at 173-186 (HNHPSGVAEPSRAD).

Belongs to the UPF0758 family.

In Nitrosomonas eutropha (strain DSM 101675 / C91 / Nm57), this protein is UPF0758 protein Neut_0782.